The following is a 227-amino-acid chain: Acyl-protein thioesterase 1 (227 aa).

Catalysis depends on charge relay system residues S119, D173, and H207.

It belongs to the AB hydrolase superfamily. AB hydrolase 2 family.

Its subcellular location is the cytoplasm. It localises to the nucleus. It carries out the reaction S-hexadecanoyl-L-cysteinyl-[protein] + H2O = L-cysteinyl-[protein] + hexadecanoate + H(+). In terms of biological role, hydrolyzes fatty acids from S-acylated cysteine residues in proteins with a strong preference for palmitoylated G-alpha proteins over other acyl substrates. Mediates the deacylation of G-alpha proteins such as GPA1 in vivo, but has weak or no activity toward palmitoylated Ras proteins. Has weak lysophospholipase activity in vitro; however such activity may not exist in vivo. The chain is Acyl-protein thioesterase 1 from Saccharomyces cerevisiae (strain ATCC 204508 / S288c) (Baker's yeast).